A 124-amino-acid polypeptide reads, in one-letter code: Small ribosomal subunit protein uS12 (124 aa).

Asp89 bears the 3-methylthioaspartic acid mark. Residues 105-124 (AGVKDRKKGRSKYGAKRPKA) are disordered. Residues 109 to 124 (DRKKGRSKYGAKRPKA) are compositionally biased toward basic residues.

The protein belongs to the universal ribosomal protein uS12 family. As to quaternary structure, part of the 30S ribosomal subunit. Contacts proteins S8 and S17. May interact with IF1 in the 30S initiation complex.

In terms of biological role, with S4 and S5 plays an important role in translational accuracy. Interacts with and stabilizes bases of the 16S rRNA that are involved in tRNA selection in the A site and with the mRNA backbone. Located at the interface of the 30S and 50S subunits, it traverses the body of the 30S subunit contacting proteins on the other side and probably holding the rRNA structure together. The combined cluster of proteins S8, S12 and S17 appears to hold together the shoulder and platform of the 30S subunit. This is Small ribosomal subunit protein uS12 from Dichelobacter nodosus (strain VCS1703A).